The sequence spans 101 residues: Urease subunit beta (101 aa).

The protein belongs to the urease beta subunit family. In terms of assembly, heterotrimer of UreA (gamma), UreB (beta) and UreC (alpha) subunits. Three heterotrimers associate to form the active enzyme.

It localises to the cytoplasm. It catalyses the reaction urea + 2 H2O + H(+) = hydrogencarbonate + 2 NH4(+). The protein operates within nitrogen metabolism; urea degradation; CO(2) and NH(3) from urea (urease route): step 1/1. The sequence is that of Urease subunit beta from Allorhizobium ampelinum (strain ATCC BAA-846 / DSM 112012 / S4) (Agrobacterium vitis (strain S4)).